The following is a 274-amino-acid chain: 2,3,4,5-tetrahydropyridine-2,6-dicarboxylate N-succinyltransferase (274 aa).

Substrate is bound by residues Arg-106 and Asp-143.

The protein belongs to the transferase hexapeptide repeat family. Homotrimer.

The protein localises to the cytoplasm. The catalysed reaction is (S)-2,3,4,5-tetrahydrodipicolinate + succinyl-CoA + H2O = (S)-2-succinylamino-6-oxoheptanedioate + CoA. Its pathway is amino-acid biosynthesis; L-lysine biosynthesis via DAP pathway; LL-2,6-diaminopimelate from (S)-tetrahydrodipicolinate (succinylase route): step 1/3. This is 2,3,4,5-tetrahydropyridine-2,6-dicarboxylate N-succinyltransferase from Rickettsia akari (strain Hartford).